A 491-amino-acid polypeptide reads, in one-letter code: N-succinylglutamate 5-semialdehyde dehydrogenase (491 aa).

Position 223–228 (223–228 (GSANTG)) interacts with NAD(+). Active-site residues include Glu246 and Cys280.

This sequence belongs to the aldehyde dehydrogenase family. AstD subfamily.

The enzyme catalyses N-succinyl-L-glutamate 5-semialdehyde + NAD(+) + H2O = N-succinyl-L-glutamate + NADH + 2 H(+). It functions in the pathway amino-acid degradation; L-arginine degradation via AST pathway; L-glutamate and succinate from L-arginine: step 4/5. Catalyzes the NAD-dependent reduction of succinylglutamate semialdehyde into succinylglutamate. This is N-succinylglutamate 5-semialdehyde dehydrogenase from Photorhabdus laumondii subsp. laumondii (strain DSM 15139 / CIP 105565 / TT01) (Photorhabdus luminescens subsp. laumondii).